A 300-amino-acid polypeptide reads, in one-letter code: Probable lipid kinase YegS-like (300 aa).

One can recognise a DAGKc domain in the interval Met-1–Tyr-129. Residues Thr-38, Gly-64–Asp-70, and Thr-92 each bind ATP. Mg(2+) is bound by residues Leu-210, Asp-213, and Leu-215. Glu-272 functions as the Proton acceptor in the catalytic mechanism.

It belongs to the diacylglycerol/lipid kinase family. YegS lipid kinase subfamily. The cofactor is Mg(2+). Requires Ca(2+) as cofactor.

It is found in the cytoplasm. Probably phosphorylates lipids; the in vivo substrate is unknown. This is Probable lipid kinase YegS-like from Alcanivorax borkumensis (strain ATCC 700651 / DSM 11573 / NCIMB 13689 / SK2).